Consider the following 101-residue polypeptide: Capsid assembly scaffolding protein (101 aa).

The segment at 1 to 24 (MPMERDSHEEILNKLNDPELEHSE) is disordered. The stretch at 79–99 (EEIKQEELSETITIEDLEKQA) forms a coiled coil.

The protein belongs to the phi29likevirus scaffolding protein family. In terms of assembly, homodimer. Interacts non-specifically with DNA; probably binds DNA in the early stages of DNA packaging.

Functionally, scaffolding protein involved in the icosahedric procapsid assembly. Coassembles with the capsid proteins to form the procapsid. The scaffolding protein is found within the capsid as a serie of concentric shells. During DNA packaging, the scaffolding protein molecules are released from the procapsid. The protein is Capsid assembly scaffolding protein (7) of Bacillus subtilis (Bacteriophage B103).